A 714-amino-acid polypeptide reads, in one-letter code: EtfAB:quinone oxidoreductase (714 aa).

The next 6 helical transmembrane spans lie at 25-45, 87-107, 125-145, 164-184, 207-227, and 236-256; these read YEWLIYVIMLIPVSVFLFGFW, AGWMHAFLFWGFLVLFLAAGI, IGFSWVVDVLGFLALIGVMVL, DGWIILLIFAILLTGYFIEGL, PFGWMFASFFGSMSVDAMLMW, and MAIAFLFIALVPFTKLWHIFA. 2 4Fe-4S ferredoxin-type domains span residues 293–324 and 375–405; these read WKDLLDLDSCIRCGRCQENCPAYNTGKHLNPK and YDVVGSETIWDCTNCRACMEHCPMFIEHIPK. Residues C302, C305, C308, C312, C386, C389, C392, and C396 each contribute to the [4Fe-4S] cluster site.

Might constitute a membrane-associated complex with EtfA (Swol_0697), EtfB (Swol_0696), and the butyryl-CoA dehydrogenase Swol_1933 and/or Swol_2052. [4Fe-4S] cluster is required as a cofactor.

Its subcellular location is the cell membrane. The protein operates within lipid metabolism; butanoate metabolism. Oxidoreductase involved in syntrophic growth of S.wolfei with butyrate. Is presumed to link the electron flow from butyryl-CoA dehydrogenases to the membrane, in conjunction with the electron transfer flavoprotein EtfAB. May transfer electrons to the menaquinone pool of the membrane. The chain is EtfAB:quinone oxidoreductase from Syntrophomonas wolfei subsp. wolfei (strain DSM 2245B / Goettingen).